A 24-amino-acid polypeptide reads, in one-letter code: Brevinin-1Pa (24 aa).

A disulfide bridge connects residues C18 and C24.

Expressed by the skin glands.

It localises to the secreted. Functionally, antibacterial activity against Gram-positive bacterium S.aureus and Gram-negative bacterium E.coli. Has activity against C.albicans. The chain is Brevinin-1Pa from Lithobates pipiens (Northern leopard frog).